The sequence spans 110 residues: MKDRKILNEILSNTINELNLNDKKANIKIKIKPLKRKIASISLTNKTIYINKNILPYLSDEEIRFILAHELLHLKYGKYHINEFEEELLFLFPNKEAILINLINKLHQKK.

It to M.jannaschii MJ0123 and A.aeolicus AA15.

This is an uncharacterized protein from Methanocaldococcus jannaschii (strain ATCC 43067 / DSM 2661 / JAL-1 / JCM 10045 / NBRC 100440) (Methanococcus jannaschii).